A 256-amino-acid chain; its full sequence is Small ribosomal subunit protein eS1 (256 aa).

Over residues 1–18 (MAVGKNKRLSKGKKGLKK) the composition is skewed to basic residues. A disordered region spans residues 1–20 (MAVGKNKRLSKGKKGLKKRT). An N-acetylalanine; partial modification is found at alanine 2.

This sequence belongs to the eukaryotic ribosomal protein eS1 family. As to quaternary structure, component of the small ribosomal subunit. Mature ribosomes consist of a small (40S) and a large (60S) subunit. The 40S subunit contains about 33 different proteins and 1 molecule of RNA (18S). The 60S subunit contains about 49 different proteins and 3 molecules of RNA (25S, 5.8S and 5S).

The protein localises to the cytoplasm. The chain is Small ribosomal subunit protein eS1 (rps1) from Talaromyces marneffei (strain ATCC 18224 / CBS 334.59 / QM 7333) (Penicillium marneffei).